The chain runs to 110 residues: Large ribosomal subunit protein uL22 (110 aa).

The protein belongs to the universal ribosomal protein uL22 family. Part of the 50S ribosomal subunit.

This protein binds specifically to 23S rRNA; its binding is stimulated by other ribosomal proteins, e.g. L4, L17, and L20. It is important during the early stages of 50S assembly. It makes multiple contacts with different domains of the 23S rRNA in the assembled 50S subunit and ribosome. In terms of biological role, the globular domain of the protein is located near the polypeptide exit tunnel on the outside of the subunit, while an extended beta-hairpin is found that lines the wall of the exit tunnel in the center of the 70S ribosome. The protein is Large ribosomal subunit protein uL22 of Nitrosococcus oceani (strain ATCC 19707 / BCRC 17464 / JCM 30415 / NCIMB 11848 / C-107).